The following is a 113-amino-acid chain: MQVKAEARYIRVSPQKARLVVDLIRGQQAGKALTTLRTTNKRIAPTVEKVLQSAIANATNRNENVDVDQLFVTEAYVNEGPRMKRVRPAPMGRAYRYQRRLAHIVIKVTEKEA.

It belongs to the universal ribosomal protein uL22 family. In terms of assembly, part of the 50S ribosomal subunit.

This protein binds specifically to 23S rRNA; its binding is stimulated by other ribosomal proteins, e.g. L4, L17, and L20. It is important during the early stages of 50S assembly. It makes multiple contacts with different domains of the 23S rRNA in the assembled 50S subunit and ribosome. Functionally, the globular domain of the protein is located near the polypeptide exit tunnel on the outside of the subunit, while an extended beta-hairpin is found that lines the wall of the exit tunnel in the center of the 70S ribosome. The polypeptide is Large ribosomal subunit protein uL22 (Solibacter usitatus (strain Ellin6076)).